We begin with the raw amino-acid sequence, 331 residues long: L-lactate dehydrogenase A chain (331 aa).

NAD(+)-binding positions include 29–57 and Arg-98; that span reads GMVGMASAISILLKDLCDELAMVDVMEDK. The substrate site is built by Arg-105, Asn-137, and Arg-168. Residue Asn-137 coordinates NAD(+). The Proton acceptor role is filled by His-192. Position 247 (Thr-247) interacts with substrate.

The protein belongs to the LDH/MDH superfamily. LDH family. Homotetramer.

The protein resides in the cytoplasm. It catalyses the reaction (S)-lactate + NAD(+) = pyruvate + NADH + H(+). The protein operates within fermentation; pyruvate fermentation to lactate; (S)-lactate from pyruvate: step 1/1. In terms of biological role, interconverts simultaneously and stereospecifically pyruvate and lactate with concomitant interconversion of NADH and NAD(+). This is L-lactate dehydrogenase A chain (ldha) from Patagonotothen tessellata (Black southern cod).